Here is a 197-residue protein sequence, read N- to C-terminus: Peptide deformylase (197 aa).

Positions 106 and 148 each coordinate Fe cation. E149 is a catalytic residue. Residue H152 coordinates Fe cation.

Belongs to the polypeptide deformylase family. It depends on Fe(2+) as a cofactor.

The catalysed reaction is N-terminal N-formyl-L-methionyl-[peptide] + H2O = N-terminal L-methionyl-[peptide] + formate. Functionally, removes the formyl group from the N-terminal Met of newly synthesized proteins. Requires at least a dipeptide for an efficient rate of reaction. N-terminal L-methionine is a prerequisite for activity but the enzyme has broad specificity at other positions. This chain is Peptide deformylase, found in Mycobacterium ulcerans (strain Agy99).